A 395-amino-acid polypeptide reads, in one-letter code: Pyridinium-3,5-bisthiocarboxylic acid mononucleotide nickel insertion protein (395 aa).

This sequence belongs to the LarC family.

It carries out the reaction Ni(II)-pyridinium-3,5-bisthiocarboxylate mononucleotide = pyridinium-3,5-bisthiocarboxylate mononucleotide + Ni(2+). Functionally, involved in the biosynthesis of a nickel-pincer cofactor ((SCS)Ni(II) pincer complex). Binds Ni(2+), and functions in nickel delivery to pyridinium-3,5-bisthiocarboxylic acid mononucleotide (P2TMN), to form the mature cofactor. Is thus probably required for the activation of nickel-pincer cofactor-dependent enzymes. This is Pyridinium-3,5-bisthiocarboxylic acid mononucleotide nickel insertion protein from Staphylococcus epidermidis (strain ATCC 12228 / FDA PCI 1200).